The primary structure comprises 130 residues: Serum amyloid A-4 protein (130 aa).

An N-terminal signal peptide occupies residues 1–18; it reads MRLFTGIVFCSLVMGVTS. Asn94 is a glycosylation site (N-linked (GlcNAc...) asparagine; partial). Residues 101 to 130 form a disordered region; that stretch reads DSKSNEKAEEWGRSGKDPDRFRPDGLPKKY.

It belongs to the SAA family. As to quaternary structure, apolipoprotein of the HDL complex. As to expression, expressed by the liver; secreted in plasma.

Its subcellular location is the secreted. Its function is as follows. Major acute phase reactant. The chain is Serum amyloid A-4 protein from Homo sapiens (Human).